We begin with the raw amino-acid sequence, 485 residues long: Trigger factor (485 aa).

Residues 171–256 (GDRVVIDFVG…VKAVKAPGEA (86 aa)) enclose the PPIase FKBP-type domain. Residues 443-485 (FADDEDEAAEAAAPASEAGASKGVISEGVISEGSAPSHETGAA) form a disordered region. A compositionally biased stretch (low complexity) spans 452–462 (EAAAPASEAGA).

This sequence belongs to the FKBP-type PPIase family. Tig subfamily.

It is found in the cytoplasm. It catalyses the reaction [protein]-peptidylproline (omega=180) = [protein]-peptidylproline (omega=0). In terms of biological role, involved in protein export. Acts as a chaperone by maintaining the newly synthesized protein in an open conformation. Functions as a peptidyl-prolyl cis-trans isomerase. This is Trigger factor from Methylobacterium sp. (strain 4-46).